A 402-amino-acid polypeptide reads, in one-letter code: Tyrosine--tRNA ligase (402 aa).

Residues 48 to 57 carry the 'HIGH' region motif; that stretch reads PSRPDLHLGH. The 'KMSKS' region signature appears at 232–236; it reads KMSKS. Lys-235 lines the ATP pocket. The S4 RNA-binding domain maps to 339 to 402; it reads MPIIDLLTLL…KRKFFKIRSK (64 aa).

It belongs to the class-I aminoacyl-tRNA synthetase family. TyrS type 2 subfamily. In terms of assembly, homodimer.

It is found in the cytoplasm. The catalysed reaction is tRNA(Tyr) + L-tyrosine + ATP = L-tyrosyl-tRNA(Tyr) + AMP + diphosphate + H(+). In terms of biological role, catalyzes the attachment of tyrosine to tRNA(Tyr) in a two-step reaction: tyrosine is first activated by ATP to form Tyr-AMP and then transferred to the acceptor end of tRNA(Tyr). This Chlorobium chlorochromatii (strain CaD3) protein is Tyrosine--tRNA ligase.